A 256-amino-acid polypeptide reads, in one-letter code: Small ribosomal subunit protein eS1 (256 aa).

The residue at position 2 (Ala-2) is an N-acetylalanine; partial.

The protein belongs to the eukaryotic ribosomal protein eS1 family. Component of the small ribosomal subunit. Mature ribosomes consist of a small (40S) and a large (60S) subunit. The 40S subunit contains about 33 different proteins and 1 molecule of RNA (18S). The 60S subunit contains about 49 different proteins and 3 molecules of RNA (25S, 5.8S and 5S).

It is found in the cytoplasm. The polypeptide is Small ribosomal subunit protein eS1 (Eremothecium gossypii (strain ATCC 10895 / CBS 109.51 / FGSC 9923 / NRRL Y-1056) (Yeast)).